The chain runs to 126 residues: Large ribosomal subunit protein bL12 (126 aa).

Belongs to the bacterial ribosomal protein bL12 family. Homodimer. Part of the ribosomal stalk of the 50S ribosomal subunit. Forms a multimeric L10(L12)X complex, where L10 forms an elongated spine to which 2 to 4 L12 dimers bind in a sequential fashion. Binds GTP-bound translation factors.

Functionally, forms part of the ribosomal stalk which helps the ribosome interact with GTP-bound translation factors. Is thus essential for accurate translation. In Citrifermentans bemidjiense (strain ATCC BAA-1014 / DSM 16622 / JCM 12645 / Bem) (Geobacter bemidjiensis), this protein is Large ribosomal subunit protein bL12.